Consider the following 148-residue polypeptide: 3-dehydroquinate dehydratase (148 aa).

Y23 serves as the catalytic Proton acceptor. Substrate-binding residues include N74, H80, and D87. The Proton donor role is filled by H100. Substrate-binding positions include 101–102 (IS) and R111.

The protein belongs to the type-II 3-dehydroquinase family. Homododecamer.

The enzyme catalyses 3-dehydroquinate = 3-dehydroshikimate + H2O. It functions in the pathway metabolic intermediate biosynthesis; chorismate biosynthesis; chorismate from D-erythrose 4-phosphate and phosphoenolpyruvate: step 3/7. Functionally, catalyzes a trans-dehydration via an enolate intermediate. The polypeptide is 3-dehydroquinate dehydratase (Anoxybacillus flavithermus (strain DSM 21510 / WK1)).